The sequence spans 132 residues: U-scoloptoxin(05)-Er3a (132 aa).

The first 19 residues, 1 to 19, serve as a signal peptide directing secretion; that stretch reads MRSWFVFVALLAVVFLPSS.

The protein belongs to the scoloptoxin-05 family. In terms of processing, contains 5 disulfide bonds. As to expression, expressed by the venom gland.

It is found in the secreted. The polypeptide is U-scoloptoxin(05)-Er3a (Ethmostigmus rubripes (Giant centipede)).